Reading from the N-terminus, the 365-residue chain is 3-amino-4-hydroxybenzoate 4-O-methyltransferase (365 aa).

Positions Met1–Thr18 are enriched in polar residues. The interval Met1–Asp32 is disordered. Residues Asp227, Gly253–Phe255, and Arg270 each bind S-adenosyl-L-methionine. His273 acts as the Proton acceptor in catalysis.

It belongs to the class I-like SAM-binding methyltransferase superfamily. Cation-independent O-methyltransferase family.

It carries out the reaction 3-amino-2,4-dihydroxybenzoate + S-adenosyl-L-methionine = 3-amino-2-hydroxy-4-methoxybenzoate + S-adenosyl-L-homocysteine + H(+). The protein operates within antibiotic biosynthesis. Part of a gene cluster involved in the biosynthesis of cremeomycin, a light-sensitive o-diazoquinone with antibacterial and antiproliferative effects. Catalyzes the methylation of the C4 hydroxyl group of 3-amino-2,4-dihydroxybenzoate (3,2,4-ADHBA) to form 3-amino-2-hydroxy-4-methoxybenzoate (3,2,4-AHMBA). In vitro, can also catalyze the methylation of 3-amino-4-hydroxybenzoate (3,4-AHBA). This is 3-amino-4-hydroxybenzoate 4-O-methyltransferase from Streptomyces cremeus.